A 197-amino-acid polypeptide reads, in one-letter code: Beta-crystallin A2 (197 aa).

The interval 1-11 (MSGTLSQGSSP) is N-terminal arm. Beta/gamma crystallin 'Greek key' domains follow at residues 12–52 (ARLT…KVES) and 53–99 (GAWV…RPLL). The segment at 100 to 105 (CANHSD) is connecting peptide. Beta/gamma crystallin 'Greek key' domains are found at residues 106–147 (SRVT…KVTS) and 148–196 (GAWV…RRVQ).

The protein belongs to the beta/gamma-crystallin family. Homo/heterodimer, or complexes of higher-order. The structure of beta-crystallin oligomers seems to be stabilized through interactions between the N-terminal arms.

Crystallins are the dominant structural components of the vertebrate eye lens. The chain is Beta-crystallin A2 (CRYBA2) from Macropus fuliginosus (Western gray kangaroo).